The primary structure comprises 124 residues: Mini zinc finger protein 4 (124 aa).

The ZF-HD dimerization-type; degenerate zinc-finger motif lies at 35–84 (YGECRRNHAARMGGHAVDGCREFLAEGEEGTGGALRCAACGCHRSFHRRV).

As to quaternary structure, homo- and heterodimers.

The protein localises to the cytoplasm. Inhibits zinc finger homeodomain (ZHD) transcription factors, by interacting with them to prevent both their nuclear localization and their DNA-binding properties. The polypeptide is Mini zinc finger protein 4 (MIF4) (Oryza sativa subsp. japonica (Rice)).